We begin with the raw amino-acid sequence, 585 residues long: ATP-dependent lipid A-core flippase (585 aa).

The next 5 membrane-spanning stretches (helical) occupy residues 16-36 (LWPY…ALII), 66-86 (FLSM…ASGF), 156-176 (IIGL…ILLV), 252-272 (AIAN…VLVL), and 278-298 (LRAE…FGLM). Positions 29 to 313 (VAVVALIINA…LTNVTSQFQR (285 aa)) constitute an ABC transmembrane type-1 domain. The ABC transporter domain occupies 345 to 581 (IQVKNVTFTY…DGAYAQLHRI (237 aa)). Residue 379–386 (GRSGSGKS) participates in ATP binding.

This sequence belongs to the ABC transporter superfamily. Lipid exporter (TC 3.A.1.106) family. In terms of assembly, homodimer.

Its subcellular location is the cell inner membrane. The enzyme catalyses ATP + H2O + lipid A-core oligosaccharideSide 1 = ADP + phosphate + lipid A-core oligosaccharideSide 2.. Involved in lipopolysaccharide (LPS) biosynthesis. Translocates lipid A-core from the inner to the outer leaflet of the inner membrane. Transmembrane domains (TMD) form a pore in the inner membrane and the ATP-binding domain (NBD) is responsible for energy generation. This is ATP-dependent lipid A-core flippase from Photobacterium profundum (strain SS9).